Here is a 198-residue protein sequence, read N- to C-terminus: FMN-dependent NADH:quinone oxidoreductase (198 aa).

Residues Ser-10, 16–18, 94–97, and 138–141 each bind FMN; these read SQS, MYNF, and TRGG.

It belongs to the azoreductase type 1 family. In terms of assembly, homodimer. FMN is required as a cofactor.

The enzyme catalyses 2 a quinone + NADH + H(+) = 2 a 1,4-benzosemiquinone + NAD(+). It catalyses the reaction N,N-dimethyl-1,4-phenylenediamine + anthranilate + 2 NAD(+) = 2-(4-dimethylaminophenyl)diazenylbenzoate + 2 NADH + 2 H(+). In terms of biological role, quinone reductase that provides resistance to thiol-specific stress caused by electrophilic quinones. Its function is as follows. Also exhibits azoreductase activity. Catalyzes the reductive cleavage of the azo bond in aromatic azo compounds to the corresponding amines. The protein is FMN-dependent NADH:quinone oxidoreductase of Shewanella baltica (strain OS195).